Consider the following 205-residue polypeptide: Ras-related and estrogen-regulated growth inhibitor-like protein (205 aa).

The small GTPase-like stretch occupies residues 1 to 205 (MSNFLHLKYN…NVFGKRRKSV (205 aa)). Residues 11-18 (EKSVSVTK), 58-64 (DPCSQTQ), and 123-126 (NKRD) contribute to the GTP site.

It belongs to the small GTPase superfamily. Ras family.

It carries out the reaction GTP + H2O = GDP + phosphate + H(+). Its function is as follows. Binds GDP/GTP and may possess intrinsic GTPase activity. In Homo sapiens (Human), this protein is Ras-related and estrogen-regulated growth inhibitor-like protein (RERGL).